We begin with the raw amino-acid sequence, 190 residues long: Tereporin-Ca1 (190 aa).

The interval 2–21 (TAGSSLAGTTLSGLAASGYR) is N-terminal region. Residues Gly78, Ser96, Pro98, Tyr131, and Tyr132 each coordinate phosphocholine. The Cell attachment site, crucial for protein stability motif lies at 138–140 (KGE).

Belongs to the actinoporin family. Conoidea subfamily. In terms of assembly, octamer or nonamer in membranes. Monomer in the soluble state. In terms of tissue distribution, expressed by the venom duct.

The protein resides in the secreted. It localises to the nematocyst. Its subcellular location is the target cell membrane. Functionally, pore-forming protein that forms pores of around 1 nm and causes cardiac stimulation and cytolysis. This Terebra anilis (Auger snail) protein is Tereporin-Ca1.